The chain runs to 378 residues: MVKPLRLNDRHQQILRATVQHYIATAEPVGSHTLAQEYQFAVSSATIRNALGQLEKAGLLYQPHVSAGRVPSDSGYRIYVDNLLTWSDRQSRTVKQRLENEINGDNWHFEALIQRMGQILAGLSGYIALITFPQTETVQLRHLQLMLLPSHQILIILVTDSYHTHSATLDLPAAMEAKEEGELEQELAIFSNFLNAQLRGKNLSELSHLNWQELDQKFSIYADFLKGLQQQIKPLLQRRMAGPLVVHGVSKVIQQPEFSQLEQVQMLLSLLEQEQDKLFSLLFDPDNYGDNLANLGQEMNLLTGETMPKTRPVVTIRIGAENPLESMHPCTLVSAIYRQQEIPMGSVSILGPTRMVYQQTIPLVEQAAECLSEALSKN.

This sequence belongs to the HrcA family.

Its function is as follows. Negative regulator of class I heat shock genes (grpE-dnaK-dnaJ and groELS operons). Prevents heat-shock induction of these operons. This Synechocystis sp. (strain ATCC 27184 / PCC 6803 / Kazusa) protein is Heat-inducible transcription repressor HrcA.